Consider the following 409-residue polypeptide: L-cysteine:1D-myo-inositol 2-amino-2-deoxy-alpha-D-glucopyranoside ligase (409 aa).

Zn(2+) is bound at residue Cys25. Residues Cys25–Thr28, Thr40, and Asn63–Thr65 contribute to the L-cysteinyl-5'-AMP site. Positions Ile27 to His37 match the 'HIGH' region motif. A 'ERGGDP' region motif is present at residues Glu179–Pro184. Trp219 contributes to the L-cysteinyl-5'-AMP binding site. Zn(2+) is bound at residue Cys223. Residue Gly241 to Asp243 coordinates L-cysteinyl-5'-AMP. His248 is a binding site for Zn(2+). Val274 serves as a coordination point for L-cysteinyl-5'-AMP. The short motif at Lys280–Ser284 is the 'KMSKS' region element.

This sequence belongs to the class-I aminoacyl-tRNA synthetase family. MshC subfamily. Monomer. Zn(2+) is required as a cofactor.

The catalysed reaction is 1D-myo-inositol 2-amino-2-deoxy-alpha-D-glucopyranoside + L-cysteine + ATP = 1D-myo-inositol 2-(L-cysteinylamino)-2-deoxy-alpha-D-glucopyranoside + AMP + diphosphate + H(+). Functionally, catalyzes the ATP-dependent condensation of GlcN-Ins and L-cysteine to form L-Cys-GlcN-Ins. The protein is L-cysteine:1D-myo-inositol 2-amino-2-deoxy-alpha-D-glucopyranoside ligase of Clavibacter sepedonicus (Clavibacter michiganensis subsp. sepedonicus).